We begin with the raw amino-acid sequence, 820 residues long: Penicillin-binding protein 1A (820 aa).

Positions Met-1–Val-120 are disordered. Basic and acidic residues predominate over residues Thr-41 to Glu-53. Residues Leu-139–Val-159 form a helical membrane-spanning segment. The transglycosylase stretch occupies residues Gly-180–Val-360. The Proton donor; for transglycosylase activity role is filled by Glu-213. The interval Ala-453–Asp-743 is transpeptidase. Ser-487 (acyl-ester intermediate; for transpeptidase activity) is an active-site residue. Over residues Ile-792 to Leu-804 the composition is skewed to low complexity. Positions Ile-792–Pro-820 are disordered. A compositionally biased stretch (pro residues) spans Ala-805–Pro-820.

It in the N-terminal section; belongs to the glycosyltransferase 51 family. The protein in the C-terminal section; belongs to the transpeptidase family. In terms of assembly, interacts with RipA via its transpeptidase domain (residues 561-820).

The protein localises to the cell membrane. It catalyses the reaction [GlcNAc-(1-&gt;4)-Mur2Ac(oyl-L-Ala-gamma-D-Glu-L-Lys-D-Ala-D-Ala)](n)-di-trans,octa-cis-undecaprenyl diphosphate + beta-D-GlcNAc-(1-&gt;4)-Mur2Ac(oyl-L-Ala-gamma-D-Glu-L-Lys-D-Ala-D-Ala)-di-trans,octa-cis-undecaprenyl diphosphate = [GlcNAc-(1-&gt;4)-Mur2Ac(oyl-L-Ala-gamma-D-Glu-L-Lys-D-Ala-D-Ala)](n+1)-di-trans,octa-cis-undecaprenyl diphosphate + di-trans,octa-cis-undecaprenyl diphosphate + H(+). The catalysed reaction is Preferential cleavage: (Ac)2-L-Lys-D-Ala-|-D-Ala. Also transpeptidation of peptidyl-alanyl moieties that are N-acyl substituents of D-alanine.. It functions in the pathway cell wall biogenesis; peptidoglycan biosynthesis. Cell wall formation. Synthesis of cross-linked peptidoglycan from the lipid intermediates. The enzyme has a penicillin-insensitive transglycosylase N-terminal domain (formation of linear glycan strands) and a penicillin-sensitive transpeptidase C-terminal domain (cross-linking of the peptide subunits). Has little peptidoglycan hydrolytic activity; however it inhibits the synergistic peptidoglycan hydrolysis of RipA plus RpfB. The polypeptide is Penicillin-binding protein 1A (ponA1) (Mycobacterium tuberculosis (strain ATCC 25618 / H37Rv)).